Consider the following 1657-residue polypeptide: MASKQAKRKEVHRINSAHGSDKSKDLYHFGSNVPPGSFEQKKGKFPIWPEWSEADINAEKWDAGKGGKEKDKTAKSPIFHFFEDPEGKIELPQSLKVFSWKRPQDFIFSRTPVVVKNEITFDLFSPNEHLLCSELMRWIISEIYAVWKIFNGGILSNYHKGNLGELPILPWKPWEHIYSLCKAVKGHVPLFNSYGKYVVKLYWMGCWRKITVDDFLPFDEENNLLLPATSYEFELWPMLLSKAIIKLANVDVHVAHRRELGELTVIHALTGWLPEVIPLHPAYVDRVWELLKEILPEFKLTEEPSSESKITTIDNKLKEATKENKDGKDGKNGKDLKDGKDMKDGKDGKDGKDGKDGKDGKDEKADARDLGKKNKKDGEKEKEKFKFSLHGSRPSSDVQYSMQSLSECSSAIQLPHMVVYATFTPLYLFENKIFSLEKMANSAEKLREYGLSHICSHPVLVTRSRSCPLVSPPKPPPLPAWKLIRHKKETVITDEAQDAVPKKPEQFLEISSPFLNYRMTPFTIPTETHFVQSVIKKGTPLGSSLPPLVENDLVASTSQGEMSIVNGNQSQGNIALQITLGKDEPSEPALADFHQLEATSLDRDLISLTTATLDKSQEELAINEGVAKEIWLDFEDFCVCFHHIYIFHKPHSYCLNFQKSEFKFVEERVPYYLFVDSLKPIELLVCFSALVRWGESGALTKDSPPVEPGLLTAEAITWKSLKPLSVVLRIHTYATKASVVRLPAGRHMLLFNAYSPVGHAIHVCSMTTFVIGDEDIVLPNFEPESYRFTEQSIIIMKAIGNVIANFKDKGKLPAALRDLQAAHYPIPLNNKELTAQHFRVFHISLWRLMKKSQVAKPPSNFKFAFRAMVFDTDLLDSFSEDVSLAEWVDLKYSTPINEKEYTSEEIAAAVKIQSMWKGCYVRLLMKARKPETKENVTVADTLQKIWAVLEMNLEQYALSLLRLMFKSKCKSMESYPCYQDEETKLAFADHTVNYADQPPNSWFIVFREIFLVPQDMIILPKVYTTLPICILHVINNDTLEQVPKVFQKVVPFLYTKNKKGYTFVAEAYTGDTFVSGARWKLRLIGSYNPLPFLARDSPCNTFSIKEIRDYYIPNDRKILFRYSIKVTVAQSITIQVRTSKPDTFIKLQVLESEEVITSTVGKGQAVIPAFYFLGNEKALSSQSSKQVLLSHPSPKKDPEVLTKKKSGQPGQKSFKGRSGGGLTDTGMPLLEEEILNIPTLEENSSTPQQCYKYIIQCLVLFNSWPLNETQLTFVQALKDMEKMDIKEKHEEPAPMGSPDSHAVSEGQKSVGVPKTTRKGKEKSAEKEKLAKEKQAPRFEPQQVQMPTAVHSQQEDPNKPYWILRLVSEHTDSDYVDVKKDTERADEIRAMKQAWETTEPGRAIKAAQARLKYLTQFIKKPVTTDTTTSAPSPETLSVSQSQTKSSEEGELDTGKYADIKELPPNAAGSVLWKKWQMTKTITSLTKFTSSESVPKEEPPQKEIPVVRQRSPTILETSPQQIRKALEFLDFSHYVRKTAAEAVLQTEELNKQQAMQKAEEIHQFRQHRSRILSIRDIDQEERFKQKDEVLEMYGEMRDSVDEARQKILDIREVYRNKLLEAERLRMEALAAQEAAVKIEIEKKSPASDSQKKKKVGKKK.

Basic residues predominate over residues 1 to 11 (MASKQAKRKEV). Disordered regions lie at residues 1-40 (MASK…SFEQ) and 321-398 (TKEN…SSDV). Residues 70-402 (KDKTAKSPIF…RPSSDVQYSM (333 aa)) enclose the Calpain catalytic domain. The segment covering 321-386 (TKENKDGKDG…DGEKEKEKFK (66 aa)) has biased composition (basic and acidic residues). Residues 762-889 (HVCSMTTFVI…EDVSLAEWVD (128 aa)) form the Globin; C-terminal part domain. Residues Q791 and H823 each coordinate heme b. The IQ domain maps to 905–934 (EIAAAVKIQSMWKGCYVRLLMKARKPETKE). The Globin; N-terminal part domain maps to 935 to 967 (NVTVADTLQKIWAVLEMNLEQYALSLLRLMFKS). Disordered stretches follow at residues 1184–1226 (SKQV…TDTG), 1288–1356 (KHEE…QEDP), 1422–1459 (TTDT…ADIK), and 1638–1657 (IEKK…GKKK). Over residues 1321–1336 (EKSAEKEKLAKEKQAP) the composition is skewed to basic and acidic residues. Composition is skewed to polar residues over residues 1341–1351 (QQVQMPTAVHS) and 1422–1443 (TTDT…SQTK). Positions 1585–1640 (DEVLEMYGEMRDSVDEARQKILDIREVYRNKLLEAERLRMEALAAQEAAVKIEIEK) form a coiled coil.

The protein in the central section; belongs to the globin family. In the N-terminal section; belongs to the peptidase C2 family. Interacts with septin SEPT10; contributes to in vitro proteolytic cleavage of SEPT10 in a calmodulin-dependent manner. Interacts with CFAP69. Interacts with SPEF2. May interact with calmodulin. Strongly expressed in testis and lung. Weakly expressed in heart, brain, spleen, kidney and tongue.

It localises to the cell projection. Its subcellular location is the cilium. It is found in the flagellum. Functionally, probable chimeric globin with a bis-histidyl six-coordinate heme-iron atom through which it could bind dioxygen, carbon monoxide and nitric oxide. Required for sperm flagellum formation and maturation of elongating spermatids, thus playing an essential role in male fertility. This Mus musculus (Mouse) protein is Androglobin.